Reading from the N-terminus, the 493-residue chain is Aspartyl/glutamyl-tRNA(Asn/Gln) amidotransferase subunit B (493 aa).

Belongs to the GatB/GatE family. GatB subfamily. In terms of assembly, heterotrimer of A, B and C subunits.

The enzyme catalyses L-glutamyl-tRNA(Gln) + L-glutamine + ATP + H2O = L-glutaminyl-tRNA(Gln) + L-glutamate + ADP + phosphate + H(+). The catalysed reaction is L-aspartyl-tRNA(Asn) + L-glutamine + ATP + H2O = L-asparaginyl-tRNA(Asn) + L-glutamate + ADP + phosphate + 2 H(+). Its function is as follows. Allows the formation of correctly charged Asn-tRNA(Asn) or Gln-tRNA(Gln) through the transamidation of misacylated Asp-tRNA(Asn) or Glu-tRNA(Gln) in organisms which lack either or both of asparaginyl-tRNA or glutaminyl-tRNA synthetases. The reaction takes place in the presence of glutamine and ATP through an activated phospho-Asp-tRNA(Asn) or phospho-Glu-tRNA(Gln). In Aromatoleum aromaticum (strain DSM 19018 / LMG 30748 / EbN1) (Azoarcus sp. (strain EbN1)), this protein is Aspartyl/glutamyl-tRNA(Asn/Gln) amidotransferase subunit B.